We begin with the raw amino-acid sequence, 711 residues long: Serine/threonine-protein kinase ATG1b (711 aa).

Positions 20–277 (YAVGRQIGSG…FEEFFHHPFL (258 aa)) constitute a Protein kinase domain. ATP-binding positions include 26-34 (IGSGSFSVV) and lysine 49. Catalysis depends on aspartate 142, which acts as the Proton acceptor. 2 disordered regions span residues 318-342 (LPFF…TSPM) and 383-419 (FEGH…SMDQ). Positions 383 to 393 (FEGHRLSDRSQ) are enriched in basic and acidic residues. Polar residues predominate over residues 394–410 (FKPSSLPDSRSFSTQGR). Positions 421 to 424 (YVLI) match the AIM (Atg8-family-interacting motif) motif.

The protein belongs to the protein kinase superfamily. Ser/Thr protein kinase family.

The protein resides in the cytoplasmic vesicle. It is found in the autophagosome. Serine/threonine protein kinase involved in autophagy. The ATG1-ATG13 protein kinase complex regulates downstream events required for autophagosome enclosure and/or vacuolar delivery. In Arabidopsis thaliana (Mouse-ear cress), this protein is Serine/threonine-protein kinase ATG1b.